The chain runs to 507 residues: Beta-Ala-His dipeptidase (507 aa).

Positions 1–26 are cleaved as a signal peptide; that stretch reads MDPKLGRMAASLLAVLLLLLERGMFS. Residue His-132 coordinates Zn(2+). Asp-134 is a catalytic residue. Asp-165 is a binding site for Zn(2+). Glu-199 (proton acceptor) is an active-site residue. Residue Glu-200 coordinates Zn(2+). Residue Ser-219 is modified to Phosphoserine. A Zn(2+)-binding site is contributed by Asp-228. Asn-322 and Asn-382 each carry an N-linked (GlcNAc...) asparagine glycan. Residue His-478 participates in Zn(2+) binding.

Belongs to the peptidase M20A family. As to quaternary structure, homodimer. Zn(2+) is required as a cofactor. As to expression, found in serum and adult nervous central system. Absent in serum from patients with homocarnosinosis.

Its subcellular location is the secreted. It carries out the reaction Preferential hydrolysis of the beta-Ala-|-His dipeptide (carnosine), and also anserine, Xaa-|-His dipeptides and other dipeptides including homocarnosine.. The enzyme catalyses carnosine + H2O = beta-alanine + L-histidine. It catalyses the reaction anserine + H2O = N(pros)-methyl-L-histidine + beta-alanine. The catalysed reaction is L-alanyl-L-histidine + H2O = L-histidine + L-alanine. It carries out the reaction glycyl-L-histidine + H2O = L-histidine + glycine. The enzyme catalyses L-homocarnosine + H2O = 4-aminobutanoate + L-histidine. Its activity is regulated as follows. Activated by cadmium ions. Inhibited by the metal chelator 1,10-o-phenantrolin. The inhibitory concentration 50% (IC(50)) is 5 uM. Its function is as follows. Catalyzes the peptide bond hydrolysis in Xaa-His dipeptides, displaying the highest activity toward carnosine (beta-alanyl-L-histidine) and anserine (beta-alanyl-3-methyl-histidine). The sequence is that of Beta-Ala-His dipeptidase from Homo sapiens (Human).